The primary structure comprises 506 residues: Sucrose transport protein SUT3 (506 aa).

Topologically, residues 1-20 (MAVDMELDGGGDGKGKAPPQ) are cytoplasmic. A helical membrane pass occupies residues 21-41 (ISLSGLFLACMVAGGVQYGWA). Residues 42–54 (LQLSLLTPYIQTL) lie on the Extracellular side of the membrane. A helical membrane pass occupies residues 55–75 (GIPHALTSVMWLCGPIAGLIV). The Cytoplasmic portion of the chain corresponds to 76 to 94 (QPCVGLYSDKCTSSLGRRR). The helical transmembrane segment at 95 to 115 (PFILTGCIIICISVIVIGFSS) threads the bilayer. Residues 116-135 (DIGYALGDATEDCKVYRGPR) lie on the Extracellular side of the membrane. The chain crosses the membrane as a helical span at residues 136 to 156 (YHAAAAFILGFWLLDFSNNTV). The Cytoplasmic portion of the chain corresponds to 157–171 (QGPARALMADLSGRH). The helical transmembrane segment at 172–192 (GPSAANAIFCSWMALGNILGY) threads the bilayer. Residues 193 to 220 (SSGSTNDWHKWFPFLMTRACCEACANLK) are Extracellular-facing. The helical transmembrane segment at 221–241 (AAFLVAVVFLGLSTAVTMVFA) threads the bilayer. Residues 242–275 (REVALDPVAAAKRNEGEASGPLAVFKGMKNLPVG) are Cytoplasmic-facing. Residues 276-296 (MPSVLIVTGLTWLSWFPFILF) form a helical membrane-spanning segment. The Extracellular segment spans residues 297-327 (DTDWMGREIYHGRPDGSPAEVTAFQEGVRQG). A helical membrane pass occupies residues 328–348 (AFGLLLNSIVLGISSFLIEPM). Over 349–355 (CRRLGAR) the chain is Cytoplasmic. A helical membrane pass occupies residues 356-376 (AVWVMSSAVVCVAMAAVSVLS). Over 377–404 (AWSLGDFGGSVQDAARAPAEEGGVRASA) the chain is Extracellular. Residues 405-425 (LALFVFLGLPFAVLCSVPFAV) form a helical membrane-spanning segment. The Cytoplasmic segment spans residues 426 to 441 (TAQLTASRGGGQGLCT). Residues 442 to 462 (GVLNISIVVPQMAIALGAGPW) form a helical membrane-spanning segment. The Extracellular portion of the chain corresponds to 463–470 (DELFGEGN). Residues 471–491 (IPAFAMASVFAAAAAAAGVVL) traverse the membrane as a helical segment. The Cytoplasmic portion of the chain corresponds to 492–506 (LPKVSVRSVSMAGGH).

It belongs to the glycoside-pentoside-hexuronide (GPH) cation symporter transporter (TC 2.A.2.4) family. In terms of assembly, homodimer.

Its subcellular location is the cell membrane. The protein operates within glycan biosynthesis; sucrose metabolism. Responsible for the transport of sucrose into the cell, with the concomitant uptake of protons (symport system). May also transport other glucosides. This chain is Sucrose transport protein SUT3 (SUT3), found in Oryza sativa subsp. indica (Rice).